A 95-amino-acid chain; its full sequence is FXYD domain-containing ion transport regulator 6 (95 aa).

A signal peptide spans 1-18 (MELVLVFLCSLLAPTVLA). The Extracellular portion of the chain corresponds to 19–35 (SAAEKEKEMDPFHYDYQ). The chain crosses the membrane as a helical span at residues 36–58 (TLRIGGLVFAVVLFSVGILLILS). Residues 59–95 (RRCKCSFNQKPRAPGDEEAQVENLITANATEPQKAEN) lie on the Cytoplasmic side of the membrane.

Belongs to the FXYD family. Regulatory subunit of the sodium/potassium-transporting ATPase which is composed of a catalytic alpha subunit, a non-catalytic beta subunit and an additional regulatory subunit. The regulatory subunit, a member of the FXYD protein family, modulates the enzymatic activity in a tissue- and isoform-specific way by changing affinities of the Na+/K+-ATPase toward Na(+), K(+) or ATP.

It localises to the cell membrane. Its function is as follows. Associates with and regulates the activity of the sodium/potassium-transporting ATPase (NKA) which catalyzes the hydrolysis of ATP coupled with the exchange of Na(+) and K(+) ions across the plasma membrane. Reduces the apparent affinity for intracellular Na(+) with no change in the apparent affinity for extracellular K(+). In addition to modulating NKA kinetics, may also function as a regulator of NKA localization to the plasma membrane. This Pongo abelii (Sumatran orangutan) protein is FXYD domain-containing ion transport regulator 6 (FXYD6).